The chain runs to 294 residues: Shikimate dehydrogenase (NADP(+)) (294 aa).

Shikimate contacts are provided by residues 22–24 (SLS) and S69. K73 (proton acceptor) is an active-site residue. Shikimate contacts are provided by N94 and D111. Residues 135 to 139 (GAGGA) and L236 each bind NADP(+). Residue Y238 participates in shikimate binding. Position 260 (G260) interacts with NADP(+).

It belongs to the shikimate dehydrogenase family. In terms of assembly, homodimer.

It catalyses the reaction shikimate + NADP(+) = 3-dehydroshikimate + NADPH + H(+). It functions in the pathway metabolic intermediate biosynthesis; chorismate biosynthesis; chorismate from D-erythrose 4-phosphate and phosphoenolpyruvate: step 4/7. Involved in the biosynthesis of the chorismate, which leads to the biosynthesis of aromatic amino acids. Catalyzes the reversible NADPH linked reduction of 3-dehydroshikimate (DHSA) to yield shikimate (SA). The protein is Shikimate dehydrogenase (NADP(+)) of Streptococcus equi subsp. zooepidemicus (strain MGCS10565).